A 76-amino-acid polypeptide reads, in one-letter code: Heat shock factor-binding protein 1 (76 aa).

The protein belongs to the HSBP1 family. Homohexamer. Associates with heptad repeats of HSF1 trimers and probably also HSF1 monomers, and with HSP70. Association with HSF1 trimers and HSP70 coincides with attenuation of heat shock response and the conversion of HSF1 trimer to monomer.

Its subcellular location is the nucleus. Functionally, negative regulator of the heat shock response. Negatively affects HSF1 DNA-binding activity. May have a role in the suppression of the activation of the stress response during the aging process. In Homo sapiens (Human), this protein is Heat shock factor-binding protein 1 (HSBP1).